The chain runs to 58 residues: Small ribosomal subunit protein bS21 (58 aa).

Residues 25–58 (KAGTLQEARKREHYEKPSVKRKRKSEAARKRKKI) are disordered. Basic and acidic residues predominate over residues 31–42 (EARKREHYEKPS). Basic residues predominate over residues 43–58 (VKRKRKSEAARKRKKI).

It belongs to the bacterial ribosomal protein bS21 family.

The protein is Small ribosomal subunit protein bS21 of Streptococcus thermophilus (strain ATCC BAA-491 / LMD-9).